The primary structure comprises 331 residues: Thiamine-monophosphate kinase (331 aa).

Positions 43, 59, 60, and 61 each coordinate Mg(2+). H68 contacts substrate. Mg(2+)-binding residues include D90, D138, and D231. 137–138 (GD) lines the ATP pocket. S233 lines the ATP pocket. Residue D234 participates in Mg(2+) binding. Substrate is bound by residues E284 and W328.

This sequence belongs to the thiamine-monophosphate kinase family.

It carries out the reaction thiamine phosphate + ATP = thiamine diphosphate + ADP. Its pathway is cofactor biosynthesis; thiamine diphosphate biosynthesis; thiamine diphosphate from thiamine phosphate: step 1/1. Catalyzes the ATP-dependent phosphorylation of thiamine-monophosphate (TMP) to form thiamine-pyrophosphate (TPP), the active form of vitamin B1. In Corynebacterium glutamicum (strain ATCC 13032 / DSM 20300 / JCM 1318 / BCRC 11384 / CCUG 27702 / LMG 3730 / NBRC 12168 / NCIMB 10025 / NRRL B-2784 / 534), this protein is Thiamine-monophosphate kinase.